Reading from the N-terminus, the 154-residue chain is Aspartate carbamoyltransferase regulatory chain (154 aa).

Zn(2+) contacts are provided by Cys109, Cys114, Cys138, and Cys141.

This sequence belongs to the PyrI family. In terms of assembly, contains catalytic and regulatory chains. Requires Zn(2+) as cofactor.

Involved in allosteric regulation of aspartate carbamoyltransferase. This is Aspartate carbamoyltransferase regulatory chain from Pectobacterium carotovorum subsp. carotovorum (strain PC1).